A 208-amino-acid chain; its full sequence is Small ribosomal subunit protein uS4 (208 aa).

Residues 98–161 enclose the S4 RNA-binding domain; that stretch reads RRLDNVIYRL…KESPRIKELL (64 aa).

Belongs to the universal ribosomal protein uS4 family. In terms of assembly, part of the 30S ribosomal subunit. Contacts protein S5. The interaction surface between S4 and S5 is involved in control of translational fidelity.

Its function is as follows. One of the primary rRNA binding proteins, it binds directly to 16S rRNA where it nucleates assembly of the body of the 30S subunit. With S5 and S12 plays an important role in translational accuracy. The sequence is that of Small ribosomal subunit protein uS4 from Pelotomaculum thermopropionicum (strain DSM 13744 / JCM 10971 / SI).